We begin with the raw amino-acid sequence, 433 residues long: ATP-dependent RNA helicase SUB2 (433 aa).

Over residues 1–17 the composition is skewed to acidic residues; sequence MSAENQEELLDYSDSEE. A disordered region spans residues 1-39; that stretch reads MSAENQEELLDYSDSEEIAVPTTTQAGEGESANDKEADK. Residues 49 to 77 carry the Q motif motif; the sequence is TGFRDFLLKPELLRAIGDCGFEHPSEVQQ. The 176-residue stretch at 80–255 folds into the Helicase ATP-binding domain; the sequence is IPQSILGTDV…KKFMQNPLEI (176 aa). 93–100 provides a ligand contact to ATP; it reads AKSGLGKT. The DEAD box signature appears at 202-205; it reads DECD. The 162-residue stretch at 267–428 folds into the Helicase C-terminal domain; sequence GLQQYYIKLE…EFPEEGVDPS (162 aa).

It belongs to the DEAD box helicase family. DECD subfamily.

The protein localises to the nucleus. It carries out the reaction ATP + H2O = ADP + phosphate + H(+). Its function is as follows. ATP-binding RNA helicase involved in transcription elongation and required for the export of mRNA out of the nucleus. SUB2 also plays a role in pre-mRNA splicing and spliceosome assembly. May be involved in rDNA and telomeric silencing, and maintenance of genome integrity. This chain is ATP-dependent RNA helicase SUB2 (SUB2), found in Lodderomyces elongisporus (strain ATCC 11503 / CBS 2605 / JCM 1781 / NBRC 1676 / NRRL YB-4239) (Yeast).